The following is a 35-amino-acid chain: U14-ctenitoxin-Pn1a (35 aa).

Disulfide bonds link cysteine 3/cysteine 17, cysteine 10/cysteine 22, and cysteine 16/cysteine 32.

In terms of tissue distribution, expressed by the venom gland.

It is found in the secreted. Neurotoxin. This chain is U14-ctenitoxin-Pn1a, found in Phoneutria nigriventer (Brazilian armed spider).